The following is a 221-amino-acid chain: Late protein I196L (221 aa).

3 consecutive repeat copies span residues 28–48 (SNYLTTAIPNNTSTNISPTTS), 49–69 (SNYSMTAIPNNTSTNISPTTS), and 70–90 (SNYSMTAIPNNTSTNISPTTS). A 4; approximate repeat occupies 91 to 112 (SNYSMTAIPNNISDKEDYTYFS).

The protein belongs to the asfivirus I196L family.

This chain is Late protein I196L, found in African swine fever virus (isolate Tick/Malawi/Lil 20-1/1983) (ASFV).